Here is a 369-residue protein sequence, read N- to C-terminus: Flagellar P-ring protein 1 (369 aa).

Positions 1-23 (MRKQSLVTLLMVLLSLVWLPASA) are cleaved as a signal peptide.

Belongs to the FlgI family. As to quaternary structure, the basal body constitutes a major portion of the flagellar organelle and consists of four rings (L,P,S, and M) mounted on a central rod.

The protein localises to the periplasm. Its subcellular location is the bacterial flagellum basal body. Functionally, assembles around the rod to form the L-ring and probably protects the motor/basal body from shearing forces during rotation. This is Flagellar P-ring protein 1 from Yersinia pseudotuberculosis serotype I (strain IP32953).